The primary structure comprises 255 residues: NAD kinase (255 aa).

Aspartate 44 functions as the Proton acceptor in the catalytic mechanism. Residues 44–45 (DG), 114–115 (NE), aspartate 144, alanine 152, and 155–160 (TAYNLS) each bind NAD(+).

It belongs to the NAD kinase family. A divalent metal cation serves as cofactor.

The protein resides in the cytoplasm. The enzyme catalyses NAD(+) + ATP = ADP + NADP(+) + H(+). In terms of biological role, involved in the regulation of the intracellular balance of NAD and NADP, and is a key enzyme in the biosynthesis of NADP. Catalyzes specifically the phosphorylation on 2'-hydroxyl of the adenosine moiety of NAD to yield NADP. The protein is NAD kinase of Hyphomonas neptunium (strain ATCC 15444).